We begin with the raw amino-acid sequence, 178 residues long: Adenine phosphoribosyltransferase (178 aa).

Belongs to the purine/pyrimidine phosphoribosyltransferase family. In terms of assembly, homodimer.

The protein resides in the cytoplasm. It catalyses the reaction AMP + diphosphate = 5-phospho-alpha-D-ribose 1-diphosphate + adenine. It functions in the pathway purine metabolism; AMP biosynthesis via salvage pathway; AMP from adenine: step 1/1. Catalyzes a salvage reaction resulting in the formation of AMP, that is energically less costly than de novo synthesis. In Streptomyces clavuligerus, this protein is Adenine phosphoribosyltransferase.